The following is a 101-amino-acid chain: uncharacterized protein (101 aa).

This is an uncharacterized protein from Escherichia coli O157:H7.